We begin with the raw amino-acid sequence, 149 residues long: MSEENQEKQFAIQKVYTRNVSFEAPNSPEIFTQDFQPQLDVDLNVESRSLEGGVFHVVVRVTATTKMDDKTAFLCEVEQAGIFTLMGFDEGETNYLLGVQCPNTLFPYAREAVSDLVTRGGFPQLLLEPVNFEGIYADHLQKQAESTKQ.

It belongs to the SecB family. As to quaternary structure, homotetramer, a dimer of dimers. One homotetramer interacts with 1 SecA dimer.

Its subcellular location is the cytoplasm. Its function is as follows. One of the proteins required for the normal export of preproteins out of the cell cytoplasm. It is a molecular chaperone that binds to a subset of precursor proteins, maintaining them in a translocation-competent state. It also specifically binds to its receptor SecA. The sequence is that of Protein-export protein SecB from Hydrogenovibrio crunogenus (strain DSM 25203 / XCL-2) (Thiomicrospira crunogena).